The primary structure comprises 181 residues: 3-hydroxyacyl-[acyl-carrier-protein] dehydratase FabZ (181 aa).

His-54 is an active-site residue.

The protein belongs to the thioester dehydratase family. FabZ subfamily.

The protein localises to the cytoplasm. It carries out the reaction a (3R)-hydroxyacyl-[ACP] = a (2E)-enoyl-[ACP] + H2O. Functionally, involved in unsaturated fatty acids biosynthesis. Catalyzes the dehydration of short chain beta-hydroxyacyl-ACPs and long chain saturated and unsaturated beta-hydroxyacyl-ACPs. This is 3-hydroxyacyl-[acyl-carrier-protein] dehydratase FabZ from Yersinia pestis.